The primary structure comprises 427 residues: Trigger factor (427 aa).

The region spanning 163–248 (GDTVVIDFVG…IHEVKAKEVP (86 aa)) is the PPIase FKBP-type domain.

It belongs to the FKBP-type PPIase family. Tig subfamily.

It localises to the cytoplasm. The enzyme catalyses [protein]-peptidylproline (omega=180) = [protein]-peptidylproline (omega=0). Its function is as follows. Involved in protein export. Acts as a chaperone by maintaining the newly synthesized protein in an open conformation. Functions as a peptidyl-prolyl cis-trans isomerase. The polypeptide is Trigger factor (Streptococcus mutans serotype c (strain ATCC 700610 / UA159)).